A 235-amino-acid chain; its full sequence is MDLAVELKEGILLVDKPQGRTSFSLIRALTKLIGVKKIGHAGTLDPFATGVMVMLIGRKFTRLSDILLFEDKEYEAIAHLGTTTDSYDCDGKVVGRSKKIPSLEEVLSAAEYFQGEIQQLPPMFSAKKVQGKKLYEYARKGLSIERHHSTVQVHLQITKYEYPLLHFVVSCSKGTYIRSIAHELGTMLGCGAYLEQLRRLRSGRFSIDECIDGNLLDHPDFDISPYLRDAHGNSL.

Catalysis depends on D45, which acts as the Nucleophile.

This sequence belongs to the pseudouridine synthase TruB family. Type 1 subfamily.

The catalysed reaction is uridine(55) in tRNA = pseudouridine(55) in tRNA. Functionally, responsible for synthesis of pseudouridine from uracil-55 in the psi GC loop of transfer RNAs. The protein is tRNA pseudouridine synthase B of Chlamydia pneumoniae (Chlamydophila pneumoniae).